Reading from the N-terminus, the 256-residue chain is Undecaprenyl-diphosphatase (256 aa).

Transmembrane regions (helical) follow at residues Met1–Ile21, Asn39–Phe59, Ile70–Phe90, Leu97–Val117, Ala134–Gly154, Ala176–Leu196, Ala205–Ile225, and Phe235–Phe255.

It belongs to the UppP family.

It localises to the cell inner membrane. It carries out the reaction di-trans,octa-cis-undecaprenyl diphosphate + H2O = di-trans,octa-cis-undecaprenyl phosphate + phosphate + H(+). Catalyzes the dephosphorylation of undecaprenyl diphosphate (UPP). Confers resistance to bacitracin. The sequence is that of Undecaprenyl-diphosphatase from Sulfurimonas denitrificans (strain ATCC 33889 / DSM 1251) (Thiomicrospira denitrificans (strain ATCC 33889 / DSM 1251)).